A 275-amino-acid polypeptide reads, in one-letter code: UPF0758 protein RL2068 (275 aa).

The disordered stretch occupies residues 1–45; sequence MAKGPVSTSSDDELPFETQEPIAADERSFFGGQPQKPSAPNARAA. The MPN domain occupies 153–275; the sequence is VLSSWSSVIQ…HVSLKGLKLI (123 aa). Zn(2+)-binding residues include histidine 224, histidine 226, and aspartate 237. The short motif at 224 to 237 is the JAMM motif element; sequence HNHPSGDPTPSRAD.

Belongs to the UPF0758 family.

The chain is UPF0758 protein RL2068 from Rhizobium johnstonii (strain DSM 114642 / LMG 32736 / 3841) (Rhizobium leguminosarum bv. viciae).